A 310-amino-acid chain; its full sequence is GTPase Era (310 aa).

Positions 17-184 constitute an Era-type G domain; that stretch reads RSGFVALIGA…MDYLAERLPE (168 aa). A G1 region spans residues 25 to 32; it reads GATNAGKS. 25-32 is a GTP binding site; it reads GATNAGKS. The G2 stretch occupies residues 51-55; sequence QTTRA. The segment at 72–75 is G3; the sequence is DTPG. GTP is bound by residues 72 to 76 and 134 to 137; these read DTPGI and NKVD. Positions 134-137 are G4; the sequence is NKVD. Residues 163-165 form a G5 region; it reads ISA. Positions 215 to 292 constitute a KH type-2 domain; it reads LHQELPYASH…HLFLFVKVRE (78 aa).

This sequence belongs to the TRAFAC class TrmE-Era-EngA-EngB-Septin-like GTPase superfamily. Era GTPase family. In terms of assembly, monomer.

Its subcellular location is the cytoplasm. The protein localises to the cell inner membrane. In terms of biological role, an essential GTPase that binds both GDP and GTP, with rapid nucleotide exchange. Plays a role in 16S rRNA processing and 30S ribosomal subunit biogenesis and possibly also in cell cycle regulation and energy metabolism. This chain is GTPase Era, found in Sinorhizobium medicae (strain WSM419) (Ensifer medicae).